Reading from the N-terminus, the 389-residue chain is Succinate--CoA ligase [ADP-forming] subunit beta (389 aa).

The region spanning 9 to 236 (RDLFEKHGVP…KTTADPLEEK (228 aa)) is the ATP-grasp domain. ATP is bound by residues Lys45, 52 to 54 (GRG), Ala94, and Glu99. Positions 191 and 205 each coordinate Mg(2+). Substrate contacts are provided by residues Asn256 and 318–320 (GIT).

The protein belongs to the succinate/malate CoA ligase beta subunit family. As to quaternary structure, heterotetramer of two alpha and two beta subunits. It depends on Mg(2+) as a cofactor.

The enzyme catalyses succinate + ATP + CoA = succinyl-CoA + ADP + phosphate. The catalysed reaction is GTP + succinate + CoA = succinyl-CoA + GDP + phosphate. The protein operates within carbohydrate metabolism; tricarboxylic acid cycle; succinate from succinyl-CoA (ligase route): step 1/1. Its function is as follows. Succinyl-CoA synthetase functions in the citric acid cycle (TCA), coupling the hydrolysis of succinyl-CoA to the synthesis of either ATP or GTP and thus represents the only step of substrate-level phosphorylation in the TCA. The beta subunit provides nucleotide specificity of the enzyme and binds the substrate succinate, while the binding sites for coenzyme A and phosphate are found in the alpha subunit. The chain is Succinate--CoA ligase [ADP-forming] subunit beta from Kocuria rhizophila (strain ATCC 9341 / DSM 348 / NBRC 103217 / DC2201).